The following is a 650-amino-acid chain: Acetyl-coenzyme A synthetase (650 aa).

CoA is bound by residues Arg191–Arg194, Thr311, and Asn335. Residues Gly387–Pro389, Asp411–Thr416, Asp500, and Arg515 each bind ATP. Residue Ser523 coordinates CoA. Position 526 (Arg526) interacts with ATP. Val537, His539, and Val542 together coordinate Mg(2+). Arg584 is a binding site for CoA. Lys609 bears the N6-acetyllysine mark.

It belongs to the ATP-dependent AMP-binding enzyme family. Mg(2+) is required as a cofactor. Post-translationally, acetylated. Deacetylation by the SIR2-homolog deacetylase activates the enzyme.

It catalyses the reaction acetate + ATP + CoA = acetyl-CoA + AMP + diphosphate. Its function is as follows. Catalyzes the conversion of acetate into acetyl-CoA (AcCoA), an essential intermediate at the junction of anabolic and catabolic pathways. AcsA undergoes a two-step reaction. In the first half reaction, AcsA combines acetate with ATP to form acetyl-adenylate (AcAMP) intermediate. In the second half reaction, it can then transfer the acetyl group from AcAMP to the sulfhydryl group of CoA, forming the product AcCoA. This is Acetyl-coenzyme A synthetase from Shewanella frigidimarina (strain NCIMB 400).